The primary structure comprises 428 residues: Tyrosine--tRNA ligase (428 aa).

Tyr36 serves as a coordination point for L-tyrosine. The 'HIGH' region signature appears at 41 to 50 (PTARSLHIGS). L-tyrosine-binding residues include Tyr169 and Gln173. Positions 229–233 (KMGKT) match the 'KMSKS' region motif. Lys232 serves as a coordination point for ATP. An S4 RNA-binding domain is found at 361-427 (IPAYEIMHEC…GKKKYMIIKV (67 aa)).

The protein belongs to the class-I aminoacyl-tRNA synthetase family. TyrS type 1 subfamily. In terms of assembly, homodimer.

Its subcellular location is the cytoplasm. The catalysed reaction is tRNA(Tyr) + L-tyrosine + ATP = L-tyrosyl-tRNA(Tyr) + AMP + diphosphate + H(+). Its function is as follows. Catalyzes the attachment of tyrosine to tRNA(Tyr) in a two-step reaction: tyrosine is first activated by ATP to form Tyr-AMP and then transferred to the acceptor end of tRNA(Tyr). This is Tyrosine--tRNA ligase from Syntrophus aciditrophicus (strain SB).